The sequence spans 456 residues: MLPKAFLSRMAELLGEEFPAFLKALTEGKRTYGLRVNTLKLPPEAFQRISPWPLRPIPWCQEGFYYPEEARPGPHPFFYAGLYYIQEPSAQAVGVLLDPKPGERVLDLAAAPGGKTTHLAARMGGKGLLLANEVDGKRVRGLLENVERWGAPLAVTQAPPRALAEAFGTYFHRVLLDAPCSGEGMFRKDREAARHWGPSAPKRMAEVQKALLAQASRLLGPGGVLVYSTCTFAPEENEGVVAHFLKAHPEFRLEDARLHPLFAPGVPEWGEGNPELLKTARLWPHRLEGEGHFLARFRKEGGAWSTPRLERPSPLSQEALRAFRGFLEEAGLTLEGPVLDRAGHLYLLPEGLPTLLGLKAPAPGLYLGKVQKGRFLPARALALAFGATLPWPEGLPRLALTPEDPRALAFATGEGVAWEGEDHPLALVVLKTAAGEFPLDFGKAKRGVLRPVGVGL.

Residues alanine 109–lysine 115, glutamate 133, arginine 138, and aspartate 177 contribute to the S-adenosyl-L-methionine site. The active-site Nucleophile is cysteine 230.

It belongs to the class I-like SAM-binding methyltransferase superfamily. RsmB/NOP family.

The protein localises to the cytoplasm. It catalyses the reaction cytidine(1400) in 16S rRNA + S-adenosyl-L-methionine = 5-methylcytidine(1400) in 16S rRNA + S-adenosyl-L-homocysteine + H(+). It carries out the reaction cytidine(1404) in 16S rRNA + S-adenosyl-L-methionine = 5-methylcytidine(1404) in 16S rRNA + S-adenosyl-L-homocysteine + H(+). The enzyme catalyses cytidine(1407) in 16S rRNA + S-adenosyl-L-methionine = 5-methylcytidine(1407) in 16S rRNA + S-adenosyl-L-homocysteine + H(+). In terms of biological role, specifically methylates the cytosines at positions 1400 (m5C1400), 1404 (m5C1404) and 1407 (m5C1407) of 16S rRNA. C1400, C1404 and C1407 are methylated in a 30S subunit substrate, but only C1400 and C1404 are methylated when naked 16S rRNA is the substrate. Methylation by RsmF may facilitate growth at temperatures outside the optimal growth temperature. This Thermus thermophilus (strain ATCC 27634 / DSM 579 / HB8) protein is Ribosomal RNA small subunit methyltransferase F.